The chain runs to 332 residues: Probable farnesyl diphosphate synthase (332 aa).

3 residues coordinate isopentenyl diphosphate: Lys-75, Arg-78, and His-107. The Mg(2+) site is built by Asp-114 and Asp-120. Arg-125 contributes to the (2E)-geranyl diphosphate binding site. Arg-126 contacts isopentenyl diphosphate. (2E)-geranyl diphosphate is bound by residues Lys-208, Gln-250, and Lys-267.

The protein belongs to the FPP/GGPP synthase family. It depends on Mg(2+) as a cofactor.

The protein localises to the cytoplasm. It catalyses the reaction isopentenyl diphosphate + (2E)-geranyl diphosphate = (2E,6E)-farnesyl diphosphate + diphosphate. This is Probable farnesyl diphosphate synthase from Sinorhizobium fredii (strain NBRC 101917 / NGR234).